The chain runs to 84 residues: Cytochrome c oxidase subunit 12, mitochondrial (84 aa).

One can recognise a CHCH domain in the interval 27-70; the sequence is TKHCWQNYVDYHKCILAKGEDFAPCRQFWLAYRSLCPSGWYQRW. The Cx9C motif motif lies at 30 to 40; that stretch reads CWQNYVDYHKC. Disulfide bonds link C30-C62 and C40-C51. The Cx10C motif motif lies at 51 to 62; the sequence is CRQFWLAYRSLC.

The protein belongs to the cytochrome c oxidase subunit 6B family. As to quaternary structure, component of the cytochrome c oxidase (complex IV, CIV), a multisubunit enzyme composed of 11 subunits. The complex is composed of a catalytic core of 3 subunits Cox1, Cox2 and Cox3, encoded in the mitochondrial DNA, and 8 supernumerary subunits Cox4, Cox5a/Cox5, Cox6, Cox7, Cox8, Cox7a/Cox9, Cox6b/Cox12 and Cox6a/Cox13, which are encoded in the nuclear genome. The complex exists as a monomer or a dimer and forms respiratory supercomplexes (SCs) in the inner mitochondrial membrane with NADH-ubiquinone oxidoreductase (complex I, CI) and ubiquinol-cytochrome c oxidoreductase (cytochrome b-c1 complex, complex III, CIII), resulting in various different assemblies (supercomplexes I(1)IV(1), I(1)III(3)IV(2), III(2)IV(1) and III(2)IV(2) as well as larger supercomplexes of compositions like I(1)III(2)IV(5-6)).

The protein resides in the mitochondrion inner membrane. Its pathway is energy metabolism; oxidative phosphorylation. Component of the cytochrome c oxidase, the last enzyme in the mitochondrial electron transport chain which drives oxidative phosphorylation. The respiratory chain contains 3 multisubunit complexes succinate dehydrogenase (complex II, CII), ubiquinol-cytochrome c oxidoreductase (cytochrome b-c1 complex, complex III, CIII) and cytochrome c oxidase (complex IV, CIV), that cooperate to transfer electrons derived from NADH and succinate to molecular oxygen, creating an electrochemical gradient over the inner membrane that drives transmembrane transport and the ATP synthase. Cytochrome c oxidase is the component of the respiratory chain that catalyzes the reduction of oxygen to water. Electrons originating from reduced cytochrome c in the intermembrane space (IMS) are transferred via the dinuclear copper A center (CU(A)) of Cox2 and heme A of Cox1 to the active site in Cox1, a binuclear center (BNC) formed by heme A3 and copper B (CU(B)). The BNC reduces molecular oxygen to 2 water molecules using 4 electrons from cytochrome c in the IMS and 4 protons from the mitochondrial matrix. The protein is Cytochrome c oxidase subunit 12, mitochondrial (cox-13) of Neurospora crassa (strain ATCC 24698 / 74-OR23-1A / CBS 708.71 / DSM 1257 / FGSC 987).